Consider the following 207-residue polypeptide: MGMLEVRELLCERDERTLFSGLSFTLNAGEWVQITGSNGAGKTMLLRLLTGLSRPDAGEVLWQGQPLHQVRDSYHQNLLWIGHQPGIKTRLTALENLHFYHRDGDTAQCLEALAQAGLAGFEDIPVNQLSAGQQRRVALARLWLTRATLWILDEPFTAIDVNGVDRLTQRMAQHTEQGGIVILTTHQPLNVAESKIRRISLTQTRAV.

Positions 4–207 (LEVRELLCER…RISLTQTRAV (204 aa)) constitute an ABC transporter domain. An ATP-binding site is contributed by 36-43 (GSNGAGKT).

It belongs to the ABC transporter superfamily. CcmA exporter (TC 3.A.1.107) family. As to quaternary structure, the complex is composed of two ATP-binding proteins (CcmA) and two transmembrane proteins (CcmB).

The protein localises to the cell inner membrane. The enzyme catalyses heme b(in) + ATP + H2O = heme b(out) + ADP + phosphate + H(+). In terms of biological role, part of the ABC transporter complex CcmAB involved in the biogenesis of c-type cytochromes; once thought to export heme, this seems not to be the case, but its exact role is uncertain. Responsible for energy coupling to the transport system. The polypeptide is Cytochrome c biogenesis ATP-binding export protein CcmA (Shigella dysenteriae serotype 1 (strain Sd197)).